The primary structure comprises 574 residues: Squalene monooxygenase (574 aa).

Residues 1 to 20 are Cytoplasmic-facing; that stretch reads MWTFLGIATFTYFYKKFGDF. An interaction with MARCHF6 region spans residues 1–100; the sequence is MWTFLGIATF…EQLEARRRRK (100 aa). An intramembrane segment occupies 21 to 41; sequence ITLANREVLLCVLVFLSLGLV. At 42-574 the chain is on the cytoplasmic side; it reads LSYRCRHRNG…IYSEMKYMVH (533 aa). A required for degradation in response to high membrane cholesterol levels region spans residues 62–73; the sequence is QFALFSDILSGL. The segment at 118 to 574 is sufficient for enzyme activity; sequence TSSQNDPEVI…IYSEMKYMVH (457 aa). FAD is bound by residues 133–134, 153–154, arginine 161, phenylalanine 166, arginine 234, valine 250, aspartate 408, and methionine 421; these read VL and ER. Residues 516 to 574 form a hydrophobic; mediates interaction with membranes region; the sequence is PLVLIGHFFAVAIYAVYFCFKSEPWITKPRALLSSGAVLYKACSVIFPLIYSEMKYMVH.

It belongs to the squalene monooxygenase family. As to quaternary structure, interacts (via N-terminal domain) with MARCHF6. Interacts with SMIM22; this interaction modulates lipid droplet formation. It depends on FAD as a cofactor. Post-translationally, ubiquitinated by MARCHF6 in response to high cholesterol levels in intracellular membranes, leading to proteasomal degradation. Detected in liver (at protein level).

It localises to the microsome membrane. The protein resides in the endoplasmic reticulum membrane. It carries out the reaction squalene + reduced [NADPH--hemoprotein reductase] + O2 = (S)-2,3-epoxysqualene + oxidized [NADPH--hemoprotein reductase] + H2O + H(+). The protein operates within terpene metabolism; lanosterol biosynthesis; lanosterol from farnesyl diphosphate: step 2/3. Its activity is regulated as follows. Inhibited by NB-598 ((E)N-ethyl-N-(6,6-dimethyl-2-hepten-4-ynyl)-3-[(3,3'-bi-thiophen-5-yl)methoxy]benzene-methanamine). Contrary to fungal enzymes, the mammalian enzyme is only slightly inhibited by terbinafine. Inhibited by tellurite, tellurium dioxide, selenite, and selenium dioxide. Catalyzes the stereospecific oxidation of squalene to (S)-2,3-epoxysqualene, and is considered to be a rate-limiting enzyme in steroid biosynthesis. This chain is Squalene monooxygenase (SQLE), found in Homo sapiens (Human).